The following is a 344-amino-acid chain: DNA polymerase IV (344 aa).

In terms of domain architecture, UmuC spans 2 to 183; that stretch reads IMLIDFDYFF…IKINDIPGIG (182 aa). Residues D6 and D105 each coordinate Mg(2+). E106 is an active-site residue.

The protein belongs to the DNA polymerase type-Y family. As to quaternary structure, monomer. Requires Mg(2+) as cofactor.

It is found in the cytoplasm. It catalyses the reaction DNA(n) + a 2'-deoxyribonucleoside 5'-triphosphate = DNA(n+1) + diphosphate. Functionally, poorly processive, error-prone DNA polymerase involved in untargeted mutagenesis. Copies undamaged DNA at stalled replication forks, which arise in vivo from mismatched or misaligned primer ends. These misaligned primers can be extended by PolIV. Exhibits no 3'-5' exonuclease (proofreading) activity. May be involved in translesional synthesis. This chain is DNA polymerase IV, found in Picrophilus torridus (strain ATCC 700027 / DSM 9790 / JCM 10055 / NBRC 100828 / KAW 2/3).